Here is a 248-residue protein sequence, read N- to C-terminus: Trypsin II-P29 (248 aa).

The first 16 residues, 1–16 (MKFLFLILSCLGAAVA), serve as a signal peptide directing secretion. Positions 17–25 (FPGGADDDK) are cleaved as a propeptide — activation peptide. Residues 26 to 246 (IVGGYTCPEH…YVDWIQETIA (221 aa)) form the Peptidase S1 domain. 6 disulfide bridges follow: C32/C162, C50/C66, C134/C235, C141/C208, C173/C187, and C198/C222. Residue H65 is the Charge relay system of the active site. E77, N79, V82, and E87 together coordinate Ca(2+). D109 functions as the Charge relay system in the catalytic mechanism. Catalysis depends on S202, which acts as the Charge relay system.

This sequence belongs to the peptidase S1 family. The cofactor is Ca(2+). As to expression, high levels are seen in the pancreas while lower levels are found in the liver, spleen and thymus.

The protein localises to the secreted. It is found in the extracellular space. It carries out the reaction Preferential cleavage: Arg-|-Xaa, Lys-|-Xaa.. In Gallus gallus (Chicken), this protein is Trypsin II-P29.